Consider the following 85-residue polypeptide: Large ribosomal subunit protein bL27 (85 aa).

Positions 1–24 (MAHKKAGGSSRNGRDSNSKRLGVK) are disordered.

It belongs to the bacterial ribosomal protein bL27 family.

In Nitrosospira multiformis (strain ATCC 25196 / NCIMB 11849 / C 71), this protein is Large ribosomal subunit protein bL27.